The chain runs to 488 residues: Eukaryotic translation initiation factor 3 subunit L (488 aa).

Disordered stretches follow at residues 1–34 (MSLP…YREQ) and 427–449 (SEGG…HGKE). Residues 7 to 16 (QNRDAARRAP) show a composition bias toward basic and acidic residues. The segment covering 17 to 27 (DDDDDAEEETM) has biased composition (acidic residues). Residues 256–450 (DAIRMFSHIL…RSRLRHGKEI (195 aa)) enclose the PCI domain. Residues 431-440 (LLERRGDPQQ) are compositionally biased toward basic and acidic residues.

Belongs to the eIF-3 subunit L family. In terms of assembly, component of the eukaryotic translation initiation factor 3 (eIF-3) complex.

It localises to the cytoplasm. Functionally, component of the eukaryotic translation initiation factor 3 (eIF-3) complex, which is involved in protein synthesis of a specialized repertoire of mRNAs and, together with other initiation factors, stimulates binding of mRNA and methionyl-tRNAi to the 40S ribosome. The eIF-3 complex specifically targets and initiates translation of a subset of mRNAs involved in cell proliferation. The chain is Eukaryotic translation initiation factor 3 subunit L from Phaeosphaeria nodorum (strain SN15 / ATCC MYA-4574 / FGSC 10173) (Glume blotch fungus).